The primary structure comprises 252 residues: Outer kinetochore KNL1 complex subunit ZWINT (252 aa).

The disordered stretch occupies residues Gln-80–Lys-99. The span at Asp-89–Lys-99 shows a compositional bias: basic and acidic residues. Positions Leu-120–Leu-221 form a coiled coil. A phosphoserine mark is found at Ser-216 and Ser-249.

In terms of assembly, component of the KNL1 complex composed of KNL1 and ZWINT. Part of the ten-subunit outer kinetochore KMN network that includes the KNL1, MIS12 and NDC80 complexes; a bioriented kinetochore contains approximately 150 copies of the network. Interacts with the MIS12 complex subunits MIS12 DSN1, and PMF1. Interacts with the NDC80 complex subunit NDC80 during mitosis. Interacts with ZW10. Interacts with CETN3.

It localises to the nucleus. The protein resides in the chromosome. Its subcellular location is the centromere. It is found in the kinetochore. In terms of biological role, acts as a component of the outer kinetochore KNL1 complex that serves as a docking point for spindle assembly checkpoint components and mediates microtubule-kinetochore interactions. Kinetochores, consisting of a centromere-associated inner segment and a microtubule-contacting outer segment, play a crucial role in chromosome segregation by mediating the physical connection between centromeric DNA and spindle microtubules. The outer kinetochore is made up of the ten-subunit KMN network, comprising the MIS12, NDC80 and KNL1 complexes, and auxiliary microtubule-associated components; together they connect the outer kinetochore with the inner kinetochore, bind microtubules, and mediate interactions with mitotic checkpoint proteins that delay anaphase until chromosomes are bioriented on the spindle. Targets the RZZ complex to the kinetochore at prometaphase. Recruits MAD2L1 to the kinetochore, but is not required for BUB1B localization. In addition to orienting mitotic chromosomes, it is also essential for alignment of homologous chromosomes during meiotic metaphase I. In meiosis I, required to activate the spindle assembly checkpoint at unattached kinetochores to correct erroneous kinetochore-microtubule attachments. This chain is Outer kinetochore KNL1 complex subunit ZWINT (Zwint), found in Mus musculus (Mouse).